A 301-amino-acid chain; its full sequence is Dimethylsulfoniopropionate lyase (301 aa).

Residues cysteine 111 and cysteine 230 each act as proton donor/acceptor in the active site.

Belongs to the aspartate/glutamate racemases family. ALMA1 subfamily. As to quaternary structure, homotetramer.

The enzyme catalyses S,S-dimethyl-beta-propiothetin = acrylate + dimethyl sulfide + H(+). In terms of biological role, mediates cleavage of dimethylsulfoniopropionate (DMSP) into dimethyl sulfide (DMS) and acrylate. DMS is the principal form by which sulfur is transported from oceans to the atmosphere and is a key component of the ocean sulfur cycle. The polypeptide is Dimethylsulfoniopropionate lyase (Durusdinium sp. clade D (Symbiodinium sp. clade D)).